The chain runs to 406 residues: 3-oxoacyl-[acyl-carrier-protein] synthase 1 (406 aa).

Residues 1-405 (MRRVVITGIG…GTNVSLIVKK (405 aa)) enclose the Ketosynthase family 3 (KS3) domain. Catalysis depends on for beta-ketoacyl synthase activity residues cysteine 164, histidine 299, and histidine 335.

It belongs to the thiolase-like superfamily. Beta-ketoacyl-ACP synthases family. Homodimer.

The protein resides in the cytoplasm. It carries out the reaction a fatty acyl-[ACP] + malonyl-[ACP] + H(+) = a 3-oxoacyl-[ACP] + holo-[ACP] + CO2. The catalysed reaction is (3Z)-decenoyl-[ACP] + malonyl-[ACP] + H(+) = 3-oxo-(5Z)-dodecenoyl-[ACP] + holo-[ACP] + CO2. Its pathway is lipid metabolism; fatty acid biosynthesis. Functionally, involved in the type II fatty acid elongation cycle. Catalyzes the elongation of a wide range of acyl-ACP by the addition of two carbons from malonyl-ACP to an acyl acceptor. Can also use unsaturated fatty acids. Catalyzes a key reaction in unsaturated fatty acid (UFA) synthesis, the elongation of the cis-3-decenoyl-ACP produced by FabA. The protein is 3-oxoacyl-[acyl-carrier-protein] synthase 1 (fabB) of Buchnera aphidicola subsp. Acyrthosiphon pisum (strain APS) (Acyrthosiphon pisum symbiotic bacterium).